The primary structure comprises 1079 residues: Integrator complex subunit 3 homolog (1079 aa).

3 disordered regions span residues 539-574, 925-949, and 1010-1079; these read ESSERETEAVFSDDDGENIARCNKNDENTDDDDDLP, YPSSSPNKRKRPSKGSSAASSTPSA, and AVGR…NDSD. Residues 938–949 are compositionally biased toward low complexity; it reads KGSSAASSTPSA. S1049, S1050, S1054, and S1055 each carry phosphoserine. Over residues 1062–1073 the composition is skewed to basic residues; the sequence is HKITQAAKKRKK.

It belongs to the Integrator subunit 3 family. As to quaternary structure, belongs to the multiprotein complex Integrator, at least composed of IntS1, IntS2, IntS3, IntS4, omd/IntS5, IntS6, defl/IntS7, IntS8, IntS9, IntS10, IntS11, IntS12, asun/IntS13, IntS14 and IntS15. The core complex associates with protein phosphatase 2A subunits mts/PP2A and Pp2A-29B, to form the Integrator-PP2A (INTAC) complex.

It localises to the nucleus. Its subcellular location is the cytoplasm. Its function is as follows. Component of the integrator complex, a multiprotein complex that terminates RNA polymerase II (Pol II) transcription in the promoter-proximal region of genes. The integrator complex provides a quality checkpoint during transcription elongation by driving premature transcription termination of transcripts that are unfavorably configured for transcriptional elongation: the complex terminates transcription by (1) catalyzing dephosphorylation of the C-terminal domain (CTD) of Pol II subunit Polr2A/Rbp1 and Spt5, and (2) degrading the exiting nascent RNA transcript via endonuclease activity. The integrator complex is also involved in the 3'-end processing of the U7 snRNA, and also the spliceosomal snRNAs U1, U2, U4 and U5. This is Integrator complex subunit 3 homolog (IntS3) from Drosophila virilis (Fruit fly).